Here is an 800-residue protein sequence, read N- to C-terminus: Nucleolar complex protein 3 homolog (800 aa).

Residues 37-90 are disordered; it reads STIKKYRKEQRKLRQAVKDAVSKKPFPLEDPKSKRPVKGMEREEEDEEDQALPL. A compositionally biased stretch (basic residues) spans 40–51; sequence KKYRKEQRKLRQ. Over residues 52–77 the composition is skewed to basic and acidic residues; sequence AVKDAVSKKPFPLEDPKSKRPVKGME. Residues 78-90 are compositionally biased toward acidic residues; it reads REEEDEEDQALPL. A Glycyl lysine isopeptide (Lys-Gly) (interchain with G-Cter in SUMO2) cross-link involves residue K333. Residues 450-489 adopt a coiled-coil conformation; that stretch reads FKEKRKTLSRMQRKWKKAEEKLERELREAEASESTERKLK.

The protein belongs to the CBF/MAK21 family.

It is found in the nucleus. The protein localises to the nucleolus. This Cricetulus griseus (Chinese hamster) protein is Nucleolar complex protein 3 homolog (NOC3L).